A 394-amino-acid chain; its full sequence is MSRLRWLTAGESHGPALVATLEGLPAGVPITTDMVADHLARRRLGYGRGARMKFERDEVTFLGGVRHGLTLGSPVAIMVGNTEWPKWEQVMAADPVDPAILADLARNAPLTRPRPGHADLAGMQKYGFDEARPILERASARETAARVALGAVARSYLKETAGIEIVSHVVELAAAKAPYGVYPTPADVEKLDADPVRCLDADASKAMVAEIDQAHKDGDTLGGVVEVLAYDVPVGLGSHVHWDRRLDARLAAALMGIQAIKGVEVGDGFELARVPGSKAHDEIVQTADGVRRTTGRSGGTEGGLTTGELLRVRAAMKPIATVPRALATIDVATGEATKAHHQRSDVCAVPAAGIVAEAMVALVLADAVAEKFGGDSVPETRRNVRSYLDNLVVR.

NADP(+) is bound by residues Arg-42 and Arg-48. FMN-binding positions include 137 to 139 (RAS), 258 to 259 (QA), Gly-302, 317 to 321 (KPIAT), and Arg-343.

Belongs to the chorismate synthase family. Homotetramer. It depends on FMNH2 as a cofactor.

It carries out the reaction 5-O-(1-carboxyvinyl)-3-phosphoshikimate = chorismate + phosphate. It functions in the pathway metabolic intermediate biosynthesis; chorismate biosynthesis; chorismate from D-erythrose 4-phosphate and phosphoenolpyruvate: step 7/7. In terms of biological role, catalyzes the anti-1,4-elimination of the C-3 phosphate and the C-6 proR hydrogen from 5-enolpyruvylshikimate-3-phosphate (EPSP) to yield chorismate, which is the branch point compound that serves as the starting substrate for the three terminal pathways of aromatic amino acid biosynthesis. This reaction introduces a second double bond into the aromatic ring system. The chain is Chorismate synthase from Streptomyces avermitilis (strain ATCC 31267 / DSM 46492 / JCM 5070 / NBRC 14893 / NCIMB 12804 / NRRL 8165 / MA-4680).